A 494-amino-acid chain; its full sequence is Rho GTPase-activating protein 19 (494 aa).

An N-acetylalanine modification is found at Ala2. Residues Ser7 and Ser31 each carry the phosphoserine modification. The region spanning 102–308 is the Rho-GAP domain; it reads MSLKRKEKGV…FMIKHSQKLF (207 aa). Residues 399-451 are disordered; it reads QSLTQTPGREPSTPRVQKRARSRSFSGLIKRKVLGSQMTSEKKNSSPAPESVA. Residues Ser422, Ser438, and Ser470 each carry the phosphoserine modification. At Thr478 the chain carries Phosphothreonine.

Its function is as follows. GTPase activator for the Rho-type GTPases by converting them to an inactive GDP-bound state. The polypeptide is Rho GTPase-activating protein 19 (Arhgap19) (Mus musculus (Mouse)).